The following is a 427-amino-acid chain: tRNA(Ile)-lysidine synthase (427 aa).

27-32 lines the ATP pocket; the sequence is SGGVDS.

This sequence belongs to the tRNA(Ile)-lysidine synthase family.

The protein localises to the cytoplasm. The enzyme catalyses cytidine(34) in tRNA(Ile2) + L-lysine + ATP = lysidine(34) in tRNA(Ile2) + AMP + diphosphate + H(+). Its function is as follows. Ligates lysine onto the cytidine present at position 34 of the AUA codon-specific tRNA(Ile) that contains the anticodon CAU, in an ATP-dependent manner. Cytidine is converted to lysidine, thus changing the amino acid specificity of the tRNA from methionine to isoleucine. This Streptococcus equi subsp. equi (strain 4047) protein is tRNA(Ile)-lysidine synthase.